The following is a 698-amino-acid chain: Elongation factor G 1 (698 aa).

Positions 8–290 (ERYRNIGICA…AVVEFLPAPV (283 aa)) constitute a tr-type G domain. Residues 17-24 (AHVDAGKT), 88-92 (DTPGH), and 142-145 (NKMD) each bind GTP.

It belongs to the TRAFAC class translation factor GTPase superfamily. Classic translation factor GTPase family. EF-G/EF-2 subfamily.

It is found in the cytoplasm. Functionally, catalyzes the GTP-dependent ribosomal translocation step during translation elongation. During this step, the ribosome changes from the pre-translocational (PRE) to the post-translocational (POST) state as the newly formed A-site-bound peptidyl-tRNA and P-site-bound deacylated tRNA move to the P and E sites, respectively. Catalyzes the coordinated movement of the two tRNA molecules, the mRNA and conformational changes in the ribosome. The protein is Elongation factor G 1 of Shewanella sp. (strain MR-4).